Here is a 341-residue protein sequence, read N- to C-terminus: Uroporphyrinogen decarboxylase (341 aa).

Substrate contacts are provided by residues 26–30 (RQAGR), aspartate 75, tyrosine 150, serine 205, and histidine 318.

Belongs to the uroporphyrinogen decarboxylase family. Homodimer.

It localises to the cytoplasm. It catalyses the reaction uroporphyrinogen III + 4 H(+) = coproporphyrinogen III + 4 CO2. The protein operates within porphyrin-containing compound metabolism; protoporphyrin-IX biosynthesis; coproporphyrinogen-III from 5-aminolevulinate: step 4/4. Catalyzes the decarboxylation of four acetate groups of uroporphyrinogen-III to yield coproporphyrinogen-III. The protein is Uroporphyrinogen decarboxylase of Thermus thermophilus (strain ATCC 27634 / DSM 579 / HB8).